The following is a 419-amino-acid chain: UDP-N-acetylglucosamine 1-carboxyvinyltransferase (419 aa).

22–23 (KN) provides a ligand contact to phosphoenolpyruvate. Residue Arg91 coordinates UDP-N-acetyl-alpha-D-glucosamine. Cys115 (proton donor) is an active-site residue. The residue at position 115 (Cys115) is a 2-(S-cysteinyl)pyruvic acid O-phosphothioketal. UDP-N-acetyl-alpha-D-glucosamine is bound by residues 120–124 (RPVDL), 160–163 (KVSV), Asp305, and Ile327.

This sequence belongs to the EPSP synthase family. MurA subfamily.

It is found in the cytoplasm. It catalyses the reaction phosphoenolpyruvate + UDP-N-acetyl-alpha-D-glucosamine = UDP-N-acetyl-3-O-(1-carboxyvinyl)-alpha-D-glucosamine + phosphate. It functions in the pathway cell wall biogenesis; peptidoglycan biosynthesis. Functionally, cell wall formation. Adds enolpyruvyl to UDP-N-acetylglucosamine. The polypeptide is UDP-N-acetylglucosamine 1-carboxyvinyltransferase (Serratia proteamaculans (strain 568)).